A 342-amino-acid chain; its full sequence is Fructose-1,6-bisphosphatase class 1 (342 aa).

Residues glutamate 91, aspartate 113, leucine 115, and aspartate 116 each contribute to the Mg(2+) site. Residues 116–119 (DGSS), asparagine 211, and lysine 277 each bind substrate. Residue glutamate 283 coordinates Mg(2+).

This sequence belongs to the FBPase class 1 family. Homotetramer. It depends on Mg(2+) as a cofactor.

The protein resides in the cytoplasm. The catalysed reaction is beta-D-fructose 1,6-bisphosphate + H2O = beta-D-fructose 6-phosphate + phosphate. The protein operates within carbohydrate biosynthesis; gluconeogenesis. In Bordetella petrii (strain ATCC BAA-461 / DSM 12804 / CCUG 43448), this protein is Fructose-1,6-bisphosphatase class 1.